The chain runs to 720 residues: Polyribonucleotide nucleotidyltransferase (720 aa).

Mg(2+) is bound by residues aspartate 487 and aspartate 493. A KH domain is found at 554-613; sequence PRIETFKIPTDKIREVIGTGGKVIREIVEKTGAKVNIEDDGTVKVASSDGEAMKAAIKWI. The 69-residue stretch at 623–691 folds into the S1 motif domain; the sequence is GQIYDGTVVK…DRGKTRLSMK (69 aa). Positions 699-720 are disordered; sequence EDLEAKDKVAEGEKAPREAAGE. Over residues 701-720 the composition is skewed to basic and acidic residues; sequence LEAKDKVAEGEKAPREAAGE.

Belongs to the polyribonucleotide nucleotidyltransferase family. Mg(2+) serves as cofactor.

The protein localises to the cytoplasm. It catalyses the reaction RNA(n+1) + phosphate = RNA(n) + a ribonucleoside 5'-diphosphate. In terms of biological role, involved in mRNA degradation. Catalyzes the phosphorolysis of single-stranded polyribonucleotides processively in the 3'- to 5'-direction. In Bradyrhizobium diazoefficiens (strain JCM 10833 / BCRC 13528 / IAM 13628 / NBRC 14792 / USDA 110), this protein is Polyribonucleotide nucleotidyltransferase.